The primary structure comprises 168 residues: MADLFALTEEALAGMDIELVDVERAAMGLLRVTIDRVDGVRIEDCEQVSRQLSRVYEVENIDYKRLEVGSPGVDRPLRNEAEFRRFAGERIEIKLREALDGRKVFSGTLRAPEADGASGQDDTAGAGKAVFGLEFEAKKNDIQVLSFTLDDIERAKLDPVLDFKGKKR.

This sequence belongs to the RimP family.

It is found in the cytoplasm. Its function is as follows. Required for maturation of 30S ribosomal subunits. The chain is Ribosome maturation factor RimP from Bordetella bronchiseptica (strain ATCC BAA-588 / NCTC 13252 / RB50) (Alcaligenes bronchisepticus).